A 213-amino-acid chain; its full sequence is Phosphatidylethanolamine N-methyltransferase A (213 aa).

Over 1-21 the chain is Lumenal; the sequence is MIVEHAIDYIDYLMNYVDFTE. The segment at residues 22–42 is an intramembrane region (helical); it reads KYFLLTIACVVFNPTWWNITA. At 43 to 54 the chain is on the lumenal side; it reads RMEYKTKFMTKI. The helical transmembrane segment at 55–75 threads the bilayer; it reads CGSKENGCYLLAFLIFSLGIL. Over 76 to 102 the chain is Cytoplasmic; it reads RDWLFSEALIRQPIFQEFDRFEVEVLS. A helical transmembrane segment spans residues 103–123; that stretch reads YILYGFGGILVLAAYLKLGIT. 107 to 109 contacts S-adenosyl-L-methionine; the sequence is GFG. The Lumenal portion of the chain corresponds to 124–166; it reads GTYLGDYFGILMKERVTGFPFNVMNNPMYNGSVMLFIAHALSY. A helical transmembrane segment spans residues 167–187; the sequence is KSVAGLVLSFVVYVVYKFALI. Residues 188-213 are Cytoplasmic-facing; the sequence is FEESFTNYIYSTAAANAAKKNKSKSK. 189–190 provides a ligand contact to S-adenosyl-L-methionine; that stretch reads EE.

This sequence belongs to the class VI-like SAM-binding methyltransferase superfamily. PEMT/PEM2 methyltransferase family.

Its subcellular location is the endoplasmic reticulum membrane. The protein localises to the mitochondrion membrane. It carries out the reaction a 1,2-diacyl-sn-glycero-3-phospho-N-methylethanolamine + S-adenosyl-L-methionine = a 1,2-diacyl-sn-glycero-3-phospho-N,N-dimethylethanolamine + S-adenosyl-L-homocysteine + H(+). The catalysed reaction is a 1,2-diacyl-sn-glycero-3-phospho-N,N-dimethylethanolamine + S-adenosyl-L-methionine = a 1,2-diacyl-sn-glycero-3-phosphocholine + S-adenosyl-L-homocysteine + H(+). It catalyses the reaction a 1,2-diacyl-sn-glycero-3-phosphoethanolamine + S-adenosyl-L-methionine = a 1,2-diacyl-sn-glycero-3-phospho-N-methylethanolamine + S-adenosyl-L-homocysteine + H(+). Its pathway is phospholipid metabolism; phosphatidylcholine biosynthesis. In terms of biological role, catalyzes the three sequential steps of the methylation pathway of phosphatidylcholine biosynthesis, the SAM-dependent methylation of phosphatidylethanolamine (PE) to phosphatidylmonomethylethanolamine (PMME), PMME to phosphatidyldimethylethanolamine (PDME), and PDME to phosphatidylcholine (PC). The chain is Phosphatidylethanolamine N-methyltransferase A (pemtA) from Dictyostelium discoideum (Social amoeba).